The following is a 127-amino-acid chain: Aspartate 1-decarboxylase (127 aa).

The Schiff-base intermediate with substrate; via pyruvic acid role is filled by Ser25. A Pyruvic acid (Ser) modification is found at Ser25. Residue Thr57 participates in substrate binding. Residue Tyr58 is the Proton donor of the active site. 73-75 (GAA) contacts substrate.

This sequence belongs to the PanD family. Heterooctamer of four alpha and four beta subunits. Pyruvate is required as a cofactor. Post-translationally, is synthesized initially as an inactive proenzyme, which is activated by self-cleavage at a specific serine bond to produce a beta-subunit with a hydroxyl group at its C-terminus and an alpha-subunit with a pyruvoyl group at its N-terminus.

It is found in the cytoplasm. It carries out the reaction L-aspartate + H(+) = beta-alanine + CO2. Its pathway is cofactor biosynthesis; (R)-pantothenate biosynthesis; beta-alanine from L-aspartate: step 1/1. Its function is as follows. Catalyzes the pyruvoyl-dependent decarboxylation of aspartate to produce beta-alanine. The polypeptide is Aspartate 1-decarboxylase (Desulfitobacterium hafniense (strain DSM 10664 / DCB-2)).